A 329-amino-acid polypeptide reads, in one-letter code: Carbonic anhydrase (329 aa).

Residues 1–108 (MSTASAFAIN…AAARIDQITA (108 aa)) are chloroplast transit peptide-like.

Belongs to the beta-class carbonic anhydrase family. As to quaternary structure, homohexamer.

Its subcellular location is the cytoplasm. The catalysed reaction is hydrogencarbonate + H(+) = CO2 + H2O. Reversible hydration of carbon dioxide. This chain is Carbonic anhydrase, found in Flaveria pringlei.